The following is a 336-amino-acid chain: uncharacterized protein (336 aa).

29–36 (GPKSSGKS) serves as a coordination point for ATP.

Belongs to the archaeal ATPase family.

This is an uncharacterized protein from Methanocaldococcus jannaschii (strain ATCC 43067 / DSM 2661 / JAL-1 / JCM 10045 / NBRC 100440) (Methanococcus jannaschii).